A 304-amino-acid polypeptide reads, in one-letter code: Recombination-associated protein RdgC (304 aa).

This sequence belongs to the RdgC family.

Its subcellular location is the cytoplasm. The protein resides in the nucleoid. Functionally, may be involved in recombination. This chain is Recombination-associated protein RdgC, found in Shewanella sp. (strain W3-18-1).